The following is a 455-amino-acid chain: UDP-glycosyltransferase 87A2 (455 aa).

Met1 bears the N-acetylmethionine mark. UDP-alpha-D-glucose contacts are provided by residues Ser278, Cys327 to Gln329, His344 to Glu352, and Phe366 to Gln369.

Belongs to the UDP-glycosyltransferase family.

The polypeptide is UDP-glycosyltransferase 87A2 (UGT87A2) (Arabidopsis thaliana (Mouse-ear cress)).